The following is a 232-amino-acid chain: Orotidine 5'-phosphate decarboxylase (232 aa).

Substrate-binding positions include D11, K33, 60 to 69 (DLKFHDIPNT), T120, R181, Q190, G210, and R211. K62 functions as the Proton donor in the catalytic mechanism.

It belongs to the OMP decarboxylase family. Type 1 subfamily. In terms of assembly, homodimer.

It carries out the reaction orotidine 5'-phosphate + H(+) = UMP + CO2. The protein operates within pyrimidine metabolism; UMP biosynthesis via de novo pathway; UMP from orotate: step 2/2. Functionally, catalyzes the decarboxylation of orotidine 5'-monophosphate (OMP) to uridine 5'-monophosphate (UMP). The sequence is that of Orotidine 5'-phosphate decarboxylase from Vibrio vulnificus (strain CMCP6).